The primary structure comprises 317 residues: R-spondin-3 (317 aa).

A signal peptide spans 1–20 (MQLQLISIVLILHFMEYTNC). FU repeat units follow at residues 34-86 (SGVS…GFYG), 92-135 (RNDC…GLVP), and 139-183 (KKEC…EFEP). Disulfide bonds link Cys41–Cys48, Cys45–Cys54, Cys57–Cys76, Cys80–Cys95, Cys98–Cys105, Cys102–Cys111, Cys114–Cys125, Cys129–Cys189, Cys195–Cys237, Cys206–Cys213, and Cys246–Cys253. Asn184 carries an N-linked (GlcNAc...) asparagine glycan. Residues 194 to 254 (HCEVSEWSEW…ECFVKKKRCK (61 aa)) form the TSP type-1 domain. The span at 251–268 (KRCKPPKGQRRGEKKKRF) shows a compositional bias: basic residues. Residues 251-317 (KRCKPPKGQR…RDQSRDAGTV (67 aa)) are disordered. The span at 274–303 (VTAEARRERKREREKETIDREESENRNKTE) shows a compositional bias: basic and acidic residues. Asn300 carries N-linked (GlcNAc...) asparagine glycosylation.

It belongs to the R-spondin family. In terms of assembly, binds heparin.

The protein resides in the secreted. Functionally, activator of the canonical Wnt signaling pathway by acting as a ligand for lgr4-6 receptors, which acts as a key regulator of angiogenesis. Upon binding to lgr4-6 (lgr4, lgr5 or lgr6), lgr4-6 associate with phosphorylated lrp6 and frizzled receptors that are activated by extracellular Wnt receptors, triggering the canonical Wnt signaling pathway to increase expression of target genes. Acts both in the canonical. Wnt/beta-catenin-dependent pathway and in non-canonical Wnt signaling pathway. Acts as a key regulator of angiogenesis by controlling vascular stability and pruning: acts by activating the non-canonical Wnt signaling pathway in endothelial cells. Can also amplify Wnt signaling pathway independently of LGR4-6 receptors, possibly by acting as a direct antagonistic ligand to RNF43 and ZNRF3. This Danio rerio (Zebrafish) protein is R-spondin-3 (rspo3).